We begin with the raw amino-acid sequence, 255 residues long: Hydroxyacylglutathione hydrolase (255 aa).

Zn(2+) contacts are provided by histidine 55, histidine 57, aspartate 59, histidine 60, histidine 113, aspartate 132, and histidine 170.

It belongs to the metallo-beta-lactamase superfamily. Glyoxalase II family. In terms of assembly, monomer. Zn(2+) is required as a cofactor.

It catalyses the reaction an S-(2-hydroxyacyl)glutathione + H2O = a 2-hydroxy carboxylate + glutathione + H(+). It participates in secondary metabolite metabolism; methylglyoxal degradation; (R)-lactate from methylglyoxal: step 2/2. Thiolesterase that catalyzes the hydrolysis of S-D-lactoyl-glutathione to form glutathione and D-lactic acid. The protein is Hydroxyacylglutathione hydrolase of Methylobacterium nodulans (strain LMG 21967 / CNCM I-2342 / ORS 2060).